Here is a 288-residue protein sequence, read N- to C-terminus: ATP synthase gamma chain (288 aa).

The protein belongs to the ATPase gamma chain family. In terms of assembly, F-type ATPases have 2 components, CF(1) - the catalytic core - and CF(0) - the membrane proton channel. CF(1) has five subunits: alpha(3), beta(3), gamma(1), delta(1), epsilon(1). CF(0) has three main subunits: a, b and c.

It is found in the cell membrane. Functionally, produces ATP from ADP in the presence of a proton gradient across the membrane. The gamma chain is believed to be important in regulating ATPase activity and the flow of protons through the CF(0) complex. The polypeptide is ATP synthase gamma chain (Staphylococcus saprophyticus subsp. saprophyticus (strain ATCC 15305 / DSM 20229 / NCIMB 8711 / NCTC 7292 / S-41)).